The sequence spans 1385 residues: DNA-directed RNA polymerase subunit beta (1385 aa).

The protein belongs to the RNA polymerase beta chain family. The RNAP catalytic core consists of 2 alpha, 1 beta, 1 beta' and 1 omega subunit. When a sigma factor is associated with the core the holoenzyme is formed, which can initiate transcription.

The enzyme catalyses RNA(n) + a ribonucleoside 5'-triphosphate = RNA(n+1) + diphosphate. Functionally, DNA-dependent RNA polymerase catalyzes the transcription of DNA into RNA using the four ribonucleoside triphosphates as substrates. This Jannaschia sp. (strain CCS1) protein is DNA-directed RNA polymerase subunit beta.